We begin with the raw amino-acid sequence, 352 residues long: Small ribosomal subunit biogenesis GTPase RsgA 2 (352 aa).

Residues 100 to 257 (RQDGQIIATN…VIDTPGMREL (158 aa)) enclose the CP-type G domain. Residues 147-150 (TKAD) and 199-207 (GSSGVGKST) contribute to the GTP site. Zn(2+)-binding residues include cysteine 278, cysteine 283, histidine 285, and cysteine 291.

This sequence belongs to the TRAFAC class YlqF/YawG GTPase family. RsgA subfamily. In terms of assembly, monomer. Associates with 30S ribosomal subunit, binds 16S rRNA. Requires Zn(2+) as cofactor.

It localises to the cytoplasm. Its function is as follows. One of several proteins that assist in the late maturation steps of the functional core of the 30S ribosomal subunit. Helps release RbfA from mature subunits. May play a role in the assembly of ribosomal proteins into the subunit. Circularly permuted GTPase that catalyzes slow GTP hydrolysis, GTPase activity is stimulated by the 30S ribosomal subunit. The sequence is that of Small ribosomal subunit biogenesis GTPase RsgA 2 from Lactiplantibacillus plantarum (strain ATCC BAA-793 / NCIMB 8826 / WCFS1) (Lactobacillus plantarum).